The sequence spans 63 residues: Large ribosomal subunit protein bL35 (63 aa).

The disordered stretch occupies residues 24–44 (RAKAYRSHRATGKTTKQKRQL).

This sequence belongs to the bacterial ribosomal protein bL35 family.

This is Large ribosomal subunit protein bL35 from Mycoplasma mycoides subsp. mycoides SC (strain CCUG 32753 / NCTC 10114 / PG1).